The chain runs to 287 residues: Phosphatidylserine decarboxylase proenzyme (287 aa).

Catalysis depends on charge relay system; for autoendoproteolytic cleavage activity residues Asp-90, His-147, and Ser-253. Residue Ser-253 is the Schiff-base intermediate with substrate; via pyruvic acid; for decarboxylase activity of the active site. Ser-253 is modified (pyruvic acid (Ser); by autocatalysis).

It belongs to the phosphatidylserine decarboxylase family. PSD-B subfamily. Prokaryotic type I sub-subfamily. In terms of assembly, heterodimer of a large membrane-associated beta subunit and a small pyruvoyl-containing alpha subunit. It depends on pyruvate as a cofactor. Is synthesized initially as an inactive proenzyme. Formation of the active enzyme involves a self-maturation process in which the active site pyruvoyl group is generated from an internal serine residue via an autocatalytic post-translational modification. Two non-identical subunits are generated from the proenzyme in this reaction, and the pyruvate is formed at the N-terminus of the alpha chain, which is derived from the carboxyl end of the proenzyme. The autoendoproteolytic cleavage occurs by a canonical serine protease mechanism, in which the side chain hydroxyl group of the serine supplies its oxygen atom to form the C-terminus of the beta chain, while the remainder of the serine residue undergoes an oxidative deamination to produce ammonia and the pyruvoyl prosthetic group on the alpha chain. During this reaction, the Ser that is part of the protease active site of the proenzyme becomes the pyruvoyl prosthetic group, which constitutes an essential element of the active site of the mature decarboxylase.

It localises to the cell membrane. It carries out the reaction a 1,2-diacyl-sn-glycero-3-phospho-L-serine + H(+) = a 1,2-diacyl-sn-glycero-3-phosphoethanolamine + CO2. It functions in the pathway phospholipid metabolism; phosphatidylethanolamine biosynthesis; phosphatidylethanolamine from CDP-diacylglycerol: step 2/2. Functionally, catalyzes the formation of phosphatidylethanolamine (PtdEtn) from phosphatidylserine (PtdSer). This chain is Phosphatidylserine decarboxylase proenzyme, found in Aliivibrio salmonicida (strain LFI1238) (Vibrio salmonicida (strain LFI1238)).